A 357-amino-acid chain; its full sequence is Peptide chain release factor 1 (357 aa).

Position 234 is an N5-methylglutamine (Gln234). Residues 284–304 (RIEGERSEDRKSKIGTGDRSE) are disordered.

The protein belongs to the prokaryotic/mitochondrial release factor family. In terms of processing, methylated by PrmC. Methylation increases the termination efficiency of RF1.

The protein localises to the cytoplasm. Its function is as follows. Peptide chain release factor 1 directs the termination of translation in response to the peptide chain termination codons UAG and UAA. This Pelagibacter ubique (strain HTCC1062) protein is Peptide chain release factor 1.